Reading from the N-terminus, the 567-residue chain is Probable E3 ubiquitin-protein ligase ARI8 (567 aa).

The disordered stretch occupies residues 1 to 27 (MEADDDFYSGTENYSDYADSDEDDADG). Acidic residues predominate over residues 18–27 (ADSDEDDADG). The interval 124–337 (GELDCGICFE…GGFYACNRYE (214 aa)) is TRIAD supradomain. Cys128, Cys131, Cys145, His147, Cys150, Cys153, Cys173, Cys178, Cys217, Cys222, Cys239, Cys241, Cys246, Cys249, His254, Cys259, Cys286, and Cys289 together coordinate Zn(2+). The RING-type 1 zinc finger occupies 128-178 (CGICFETFLSDKLHAAACGHPFCDSCWEGYITTAINDGPGCLTLRCPDPSC). An IBR-type zinc finger spans residues 197–259 (QKYTSYFVRS…AEEAHRPVDC (63 aa)). Residues 286-316 (CPKCKRPIEKNQGCMHITCTPPCKFEFCWLC) form an RING-type 2; atypical zinc finger. The active site involves Cys299. The Zn(2+) site is built by Cys304, Cys308, Cys313, Cys316, His323, and Cys333. The interval 514–543 (DAYDRTSSSKSLGGKTKGSSSKASSSDSSH) is disordered. The span at 521 to 542 (SSKSLGGKTKGSSSKASSSDSS) shows a compositional bias: low complexity. A RanBP2-type zinc finger spans residues 540–567 (DSSHWPCEYCTYVNPRSTTICQMCEHGR).

Belongs to the RBR family. Ariadne subfamily. Zn(2+) serves as cofactor. As to expression, ubiquitous.

The catalysed reaction is [E2 ubiquitin-conjugating enzyme]-S-ubiquitinyl-L-cysteine + [acceptor protein]-L-lysine = [E2 ubiquitin-conjugating enzyme]-L-cysteine + [acceptor protein]-N(6)-ubiquitinyl-L-lysine.. It functions in the pathway protein modification; protein ubiquitination. In terms of biological role, might act as an E3 ubiquitin-protein ligase, or as part of E3 complex, which accepts ubiquitin from specific E2 ubiquitin-conjugating enzymes and then transfers it to substrates. The chain is Probable E3 ubiquitin-protein ligase ARI8 (ARI8) from Arabidopsis thaliana (Mouse-ear cress).